Here is a 466-residue protein sequence, read N- to C-terminus: MVSQALRLLCLLLGLQGCLAAGGVAKASGGETRDMPWKPGPHRVFVTQEEAHGVLHRRRRANAFLEELRPGSLERECKEEQCSFEEAREIFKDAERTKLFWISYSDGDQCASSPCQNGGSCKDQLQSYICFCLPAFEGRNCETHKDDQLICVNENGGCEQYCSDHTGTKRSCRCHEGYSLLADGVSCTPTVEYPCGKIPILEKRNASKPQGRIVGGKVCPKGECPWQVLLLVNGAQLCGGTLINTIWVVSAAHCFDKIKNWRNLIAVLGEHDLSEHDGDEQSRRVAQVIIPSTYVPGTTNHDIALLRLHQPVVLTDHVVPLCLPERTFSERTLAFVRFSLVSGWGQLLDRGATALELMVLNVPRLMTQDCLQQSRKVGDSPNITEYMFCAGYSDGSKDSCKGDSGGPHATHYRGTWYLTGIVSWGQGCATVGHFGVYTRVSQYIEWLQKLMRSEPRPGVLLRAPFP.

The N-terminal stretch at 1–20 (MVSQALRLLCLLLGLQGCLA) is a signal peptide. A propeptide spanning residues 21–60 (AGGVAKASGGETRDMPWKPGPHRVFVTQEEAHGVLHRRRR) is cleaved from the precursor. The Gla domain occupies 61–105 (ANAFLEELRPGSLERECKEEQCSFEEAREIFKDAERTKLFWISYS). Residues E66, E67, E74, E76, E79, E80, E85, E86, E89, and E95 each carry the 4-carboxyglutamate modification. A disulfide bond links C77 and C82. Positions 106–142 (DGDQCASSPCQNGGSCKDQLQSYICFCLPAFEGRNCE) constitute an EGF-like 1; calcium-binding domain. 10 cysteine pairs are disulfide-bonded: C110-C121, C115-C130, C132-C141, C151-C162, C158-C172, C174-C187, C195-C322, C219-C224, C238-C254, and C370-C389. An O-linked (Glc...) serine; alternate glycan is attached at S112. A glycan (O-linked (Xyl...) serine; alternate) is linked at S112. O-linked (Fuc) serine glycosylation occurs at S120. D123 carries the post-translational modification (3R)-3-hydroxyaspartate. The 42-residue stretch at 147–188 (DQLICVNENGGCEQYCSDHTGTKRSCRCHEGYSLLADGVSCT) folds into the EGF-like 2 domain. An N-linked (GlcNAc...) asparagine glycan is attached at N205. The region spanning 213 to 452 (IVGGKVCPKG…YIEWLQKLMR (240 aa)) is the Peptidase S1 domain. Residues H253 and D302 each act as charge relay system in the active site. A glycan (N-linked (GlcNAc...) asparagine) is linked at N382. Residue D398 coordinates substrate. C400 and C428 are joined by a disulfide. The active-site Charge relay system is the S404.

The protein belongs to the peptidase S1 family. As to quaternary structure, heterodimer of a light chain and a heavy chain linked by a disulfide bond. Interacts (activated) with iripin-8, a serine protease inhibitor from Ixodes ricinus saliva. The vitamin K-dependent, enzymatic carboxylation of some glutamate residues allows the modified protein to bind calcium. Post-translationally, the iron and 2-oxoglutarate dependent 3-hydroxylation of aspartate and asparagine is (R) stereospecific within EGF domains. In terms of processing, O- and N-glycosylated. N-glycosylation at Asn-205 occurs cotranslationally and is mediated by STT3A-containing complexes, while glycosylation at Asn-382 is post-translational and is mediated STT3B-containing complexes before folding. O-fucosylated by POFUT1 on a conserved serine or threonine residue found in the consensus sequence C2-X(4,5)-[S/T]-C3 of EGF domains, where C2 and C3 are the second and third conserved cysteines. Can be either O-glucosylated or O-xylosylated at Ser-112 by POGLUT1 in vitro. As to expression, plasma.

The protein localises to the secreted. It catalyses the reaction Selective cleavage of Arg-|-Ile bond in factor X to form factor Xa.. In terms of biological role, initiates the extrinsic pathway of blood coagulation. Serine protease that circulates in the blood in a zymogen form. Factor VII is converted to factor VIIa by factor Xa, factor XIIa, factor IXa, or thrombin by minor proteolysis. In the presence of tissue factor and calcium ions, factor VIIa then converts factor X to factor Xa by limited proteolysis. Factor VIIa also converts factor IX to factor IXa in the presence of tissue factor and calcium. The chain is Coagulation factor VII (F7) from Homo sapiens (Human).